Here is a 141-residue protein sequence, read N- to C-terminus: Nucleoside diphosphate kinase (141 aa).

Residues Lys11, Tyr59, Arg87, Thr93, Arg104, and Asn114 each contribute to the ATP site. Catalysis depends on His117, which acts as the Pros-phosphohistidine intermediate.

This sequence belongs to the NDK family. In terms of assembly, homotetramer. The cofactor is Mg(2+).

Its subcellular location is the cytoplasm. The catalysed reaction is a 2'-deoxyribonucleoside 5'-diphosphate + ATP = a 2'-deoxyribonucleoside 5'-triphosphate + ADP. The enzyme catalyses a ribonucleoside 5'-diphosphate + ATP = a ribonucleoside 5'-triphosphate + ADP. In terms of biological role, major role in the synthesis of nucleoside triphosphates other than ATP. The ATP gamma phosphate is transferred to the NDP beta phosphate via a ping-pong mechanism, using a phosphorylated active-site intermediate. The sequence is that of Nucleoside diphosphate kinase from Orientia tsutsugamushi (strain Boryong) (Rickettsia tsutsugamushi).